We begin with the raw amino-acid sequence, 660 residues long: E3 ubiquitin-protein ligase ORTHRUS 3 (660 aa).

A PHD-type zinc finger spans residues 12 to 63 (EGVCMRCKSMPPPEESLTCGTCVTPWHVSCLLSPPETLSATLQWLCPDCSGE). A disordered region spans residues 107–129 (QLLSGKGVVDEDDEEEKKKTSKG). Residues 141–197 (CSFCMQSLQKPVSVRVLFALALMLVWFLESTPCGHNACLKCFLKWMGQGHRSCGTCR) form an RING-type 1 zinc finger. The YDG domain maps to 285 to 434 (VRNQGLLVGE…CRFLFVRCDN (150 aa)). An RING-type 2 zinc finger spans residues 528 to 585 (CQICQKVMTNPVTTPCAHNFCKACLESKFAGTALVRERGSGGRKLRSQKSVMKCPCCP). A coiled-coil region spans residues 593–622 (QNPQVNREVAEVIEKLKKQEEEENAKSLDE). 2 stretches are compositionally biased toward basic and acidic residues: residues 610–621 (KQEEEENAKSLD) and 637–646 (QPKKRIKLDT). Residues 610-660 (KQEEEENAKSLDEGQCSGTSHEEEDDEQPKKRIKLDTDAEVSATVVESDMK) form a disordered region.

It is found in the nucleus. It catalyses the reaction S-ubiquitinyl-[E2 ubiquitin-conjugating enzyme]-L-cysteine + [acceptor protein]-L-lysine = [E2 ubiquitin-conjugating enzyme]-L-cysteine + N(6)-ubiquitinyl-[acceptor protein]-L-lysine.. Its pathway is protein modification; protein ubiquitination. Functionally, E3 ubiquitin-protein ligase. May participate in CpG methylation-dependent transcriptional regulation. The protein is E3 ubiquitin-protein ligase ORTHRUS 3 (ORTH3) of Arabidopsis thaliana (Mouse-ear cress).